Here is a 160-residue protein sequence, read N- to C-terminus: Regulatory protein RecX (160 aa).

It belongs to the RecX family.

The protein resides in the cytoplasm. Functionally, modulates RecA activity. The sequence is that of Regulatory protein RecX from Xanthomonas oryzae pv. oryzae (strain MAFF 311018).